Reading from the N-terminus, the 450-residue chain is MTENEQIFWNRVLELAQSQLKQATYEFFVHDARLIKVDNHVATIFLDQMKELFWEKNLKDVILTAGFEVYNAQIAVDYVYEDDLMIEQQHQGQQGYTEQAFQQLPAVQSDLNPKYSFDNFIQGDENRWAVAASIAVANTPGTTYNPLFIWGGPGLGKTHLLNAIGNSVLLENPNARIKYITAENFINEFVVHIRLDTMDELKEKFRNLDLLLIDDIQSLAKKTLSGTQEEFFNTFNALHNNNKQIVLTSDRTPDHLNDLEDRLVTRFKWGLTVNITPPDFETRVAILTNKIQEYNFIFPQDTIEYLAGQFDSNVRDLEGALKDISLVANFKQIDTITVDIAAEAIRARKQDGPKMTVIPIEEIQAQVGKFYGVTVKEIKATKRTQDIVLARQVAMFLAREMTDNSLPKIGKEFGGRDHSTVLHAYNKIKNMIGQDESLRIEIETIKNKIK.

The domain I, interacts with DnaA modulators stretch occupies residues 1 to 77; sequence MTENEQIFWN…EVYNAQIAVD (77 aa). The interval 77–109 is domain II; sequence DYVYEDDLMIEQQHQGQQGYTEQAFQQLPAVQS. The tract at residues 110–328 is domain III, AAA+ region; the sequence is DLNPKYSFDN…GALKDISLVA (219 aa). Residues glycine 154, glycine 156, lysine 157, and threonine 158 each contribute to the ATP site. The tract at residues 329 to 450 is domain IV, binds dsDNA; the sequence is NFKQIDTITV…EIETIKNKIK (122 aa).

Belongs to the DnaA family. Oligomerizes as a right-handed, spiral filament on DNA at oriC.

The protein localises to the cytoplasm. Plays an essential role in the initiation and regulation of chromosomal replication. ATP-DnaA binds to the origin of replication (oriC) to initiate formation of the DNA replication initiation complex once per cell cycle. Binds the DnaA box (a 9 base pair repeat at the origin) and separates the double-stranded (ds)DNA. Forms a right-handed helical filament on oriC DNA; dsDNA binds to the exterior of the filament while single-stranded (ss)DNA is stabiized in the filament's interior. The ATP-DnaA-oriC complex binds and stabilizes one strand of the AT-rich DNA unwinding element (DUE), permitting loading of DNA polymerase. After initiation quickly degrades to an ADP-DnaA complex that is not apt for DNA replication. Binds acidic phospholipids. This is Chromosomal replication initiator protein DnaA from Streptococcus equi subsp. equi (strain 4047).